A 1941-amino-acid polypeptide reads, in one-letter code: Myosin light chain kinase, smooth muscle (1941 aa).

Ig-like C2-type domains are found at residues 33-122 (PAFI…VELT) and 156-244 (PKFA…AELS). An intrachain disulfide couples Cys177 to Cys228. Position 226 is a phosphotyrosine; by ABL1 (Tyr226). Residues 255–329 (AVRGTKAPSP…RKVPQSSILQ (75 aa)) form a disordered region. The segment covering 286–305 (NCPSPQRSGSSARATNSHLK) has biased composition (polar residues). Phosphoserine is present on Ser295. Residues 306-320 (SPQEPKPKLCEDAPR) show a composition bias toward basic and acidic residues. Phosphoserine occurs at positions 333 and 355. Ig-like C2-type domains follow at residues 402-485 (PRFE…GQVS), 502-587 (PSFS…ATVT), 611-699 (PIFL…AVLT), and 709-809 (PWFI…APPR). 2 cysteine pairs are disulfide-bonded: Cys423–Cys475 and Cys523–Cys571. Position 452 is a phosphotyrosine; by ABL1 and SRC (Tyr452). Residues Cys730 and Cys793 are joined by a disulfide bond. Tyr780 bears the Phosphotyrosine; by ABL1 mark. Tandem repeats lie at residues 856 to 883 (DVRG…VGQL), 884 to 911 (DFRD…AEQM), 912 to 939 (DFRA…PQQV), and 940 to 966 (DFRS…AATP). Residues 856–985 (DVRGLLKRRV…KKSPSENGGN (130 aa)) are 5 X 28 AA approximate tandem repeats. An actin-binding (calcium/calmodulin-sensitive) region spans residues 911–951 (MDFRANLQRQVKPKTISEEERKVHSPQQVDFRSVLAKKGTP). The disordered stretch occupies residues 920-1120 (QVKPKTISEE…KRPESQGSAP (201 aa)). A Phosphoserine modification is found at Ser935. The segment at 936-951 (PQQVDFRSVLAKKGTP) is calmodulin-binding. A 1-5; truncated repeat occupies 967–985 (DFRSVLGGKKKSPSENGGN). A run of 5 repeats spans residues 990 to 1002 (LNVK…TPAG), 1003 to 1014 (DAQAIGALKPVG), 1015 to 1026 (NAKPAETPKPIG), 1027 to 1038 (NAKPTETLKPVG), and 1039 to 1049 (NTKPAETLKPI). The segment at 990-1049 (LNVKAGESPTPAGDAQAIGALKPVGNAKPAETPKPIGNAKPTETLKPVGNTKPAETLKPI) is 5 X 12 AA approximate tandem repeats. The segment at 1048-1482 (PIANAQPSGS…TVTVNTEQKV (435 aa)) is actin-binding (calcium/calmodulin-insensitive). A compositionally biased stretch (polar residues) spans 1052 to 1065 (AQPSGSLKPVTNAQ). Basic and acidic residues predominate over residues 1085–1099 (AGKEEVKEVKNDVNC). Residues 1120 to 1208 (PVFKEKLQDV…GQAECSCQVT (89 aa)) form the Ig-like C2-type 7 domain. Cysteines 1141 and 1192 form a disulfide. Residues 1212 to 1257 (AQTSENTKAPEMKSRRPKSSLPPVLGTESDATVKKKPAPKTPTKAA) are disordered. The Ig-like C2-type 8 domain occupies 1260–1348 (PQIIQFPEDQ…GSRQAQVNLT (89 aa)). The region spanning 1356–1449 (PAGTPCASDI…ESELTAVGEK (94 aa)) is the Fibronectin type-III domain. The interval 1435 to 1469 (SEPSQESELTAVGEKPEEPKDEVEVSDDDEKEPEV) is disordered. The span at 1453-1467 (PKDEVEVSDDDEKEP) shows a compositional bias: acidic residues. Ser1460 carries the phosphoserine modification. Tyr1471 bears the Phosphotyrosine; by ABL1 mark. One can recognise a Protein kinase domain in the interval 1486–1741 (YDIEERLGSG…CTQCLQHPWL (256 aa)). Residues 1492-1500 (LGSGKFGQV) and Lys1515 each bind ATP. At Tyr1597 the chain carries Phosphotyrosine; by ABL1. Asp1607 functions as the Proton acceptor in the catalytic mechanism. The residue at position 1657 (Tyr1657) is a Phosphotyrosine; by ABL1. The tract at residues 1733–1796 (TQCLQHPWLM…SGLSGRKSST (64 aa)) is calmodulin-binding. 5 positions are modified to phosphoserine: Ser1781, Ser1782, Ser1794, Ser1795, and Ser1798. Residues 1789 to 1809 (LSGRKSSTGSPTSPINAEKLE) form a disordered region. Polar residues predominate over residues 1792–1803 (RKSSTGSPTSPI). Phosphothreonine is present on Thr1800. Ser1801 is modified (phosphoserine). Residues 1831 to 1920 (PYFSKTIRDL…GEATCTAELI (90 aa)) form the Ig-like C2-type 9 domain. Cys1852 and Cys1904 form a disulfide bridge.

It belongs to the protein kinase superfamily. CAMK Ser/Thr protein kinase family. All isoforms including Telokin bind calmodulin. Interacts with CTTN; this interaction is reduced during thrombin-induced endothelial cell (EC) contraction but is promoted by the barrier-protective agonist sphingosine 1-phosphate (S1P) within lamellipodia. A complex made of ABL1, CTTN and MYLK regulates cortical actin-based cytoskeletal rearrangement critical to sphingosine 1-phosphate (S1P)-mediated endothelial cell (EC) barrier enhancement. Binds to NAA10/ARD1. Interacts with SVIL and PTK2B/PYK2. The cofactor is Mg(2+). Ca(2+) serves as cofactor. In terms of processing, can probably be down-regulated by phosphorylation. Tyrosine phosphorylation by ABL1 increases kinase activity, reverses MLCK-mediated inhibition of Arp2/3-mediated actin polymerization, and enhances CTTN-binding. Phosphorylation by SRC at Tyr-452 promotes CTTN binding. The C-terminus is deglutamylated by AGTPBP1/CCP1, AGBL1/CCP4 and AGBL4/CCP6, leading to the formation of Myosin light chain kinase, smooth muscle, deglutamylated form. The consequences of C-terminal deglutamylation are unknown. Smooth muscle isoform is expressed in all tissues with highest levels in bladder, uterus, vas deferens, colon, ileum, and tracheae. Isoform 1 is expressed in lung, bladder, and vas deferens. Telokin is expressed in smooth muscle cells of the gut, reproductive tract and urinary tract, including in uterus, vas deferens, bladder, colon, kidney, ureter and ovary. Telokin is also detected in the trachea.

The protein resides in the cytoplasm. It is found in the cell projection. It localises to the lamellipodium. The protein localises to the cleavage furrow. Its subcellular location is the cytoskeleton. The protein resides in the stress fiber. The catalysed reaction is L-seryl-[myosin light chain] + ATP = O-phospho-L-seryl-[myosin light chain] + ADP + H(+). The enzyme catalyses L-threonyl-[myosin light chain] + ATP = O-phospho-L-threonyl-[myosin light chain] + ADP + H(+). Functionally, calcium/calmodulin-dependent myosin light chain kinase implicated in smooth muscle contraction via phosphorylation of myosin light chains (MLC). Also regulates actin-myosin interaction through a non-kinase activity. Phosphorylates PTK2B/PYK2 and myosin light-chains. Involved in the inflammatory response (e.g. apoptosis, vascular permeability, leukocyte diapedesis), cell motility and morphology, airway hyperreactivity and other activities relevant to asthma. Required for tonic airway smooth muscle contraction that is necessary for physiological and asthmatic airway resistance. Necessary for gastrointestinal motility. Implicated in the regulation of endothelial as well as vascular permeability, probably via the regulation of cytoskeletal rearrangements. In the nervous system it has been shown to control the growth initiation of astrocytic processes in culture and to participate in transmitter release at synapses formed between cultured sympathetic ganglion cells. Critical participant in signaling sequences that result in fibroblast apoptosis. Plays a role in the regulation of epithelial cell survival. Required for epithelial wound healing, especially during actomyosin ring contraction during purse-string wound closure. Mediates RhoA-dependent membrane blebbing. Triggers TRPC5 channel activity in a calcium-dependent signaling, by inducing its subcellular localization at the plasma membrane. Promotes cell migration (including tumor cells) and tumor metastasis. PTK2B/PYK2 activation by phosphorylation mediates ITGB2 activation and is thus essential to trigger neutrophil transmigration during acute lung injury (ALI). May regulate optic nerve head astrocyte migration. Probably involved in mitotic cytoskeletal regulation. Regulates tight junction probably by modulating ZO-1 exchange in the perijunctional actomyosin ring. Mediates burn-induced microvascular barrier injury; triggers endothelial contraction in the development of microvascular hyperpermeability by phosphorylating MLC. Essential for intestinal barrier dysfunction. Mediates Giardia spp.-mediated reduced epithelial barrier function during giardiasis intestinal infection via reorganization of cytoskeletal F-actin and tight junctional ZO-1. Necessary for hypotonicity-induced Ca(2+) entry and subsequent activation of volume-sensitive organic osmolyte/anion channels (VSOAC) in cervical cancer cells. In Mus musculus (Mouse), this protein is Myosin light chain kinase, smooth muscle.